Reading from the N-terminus, the 629-residue chain is MFYQDPFDVIIIGGGHAGTEAAMAAARMGQQTLLLTHNIDTLGQMSCNPAIGGIGKGHLVKEVDALGGLMAKAIDQAGIQFRILNASKGPAVRATRAQADRVLYRQAVRTALENQPNLMIFQQAVEDLIVENDRVVGAVTQMGLKFRAKAVVLTVGTFLDGKIHIGLDNYSGGRAGDPPSIPLSRRLRELPLRVSRLKTGTPPRIDARTIDFSVLAQQHGDNPMPVFSFMGNASQHPQQVPCYITHTNEKTHDVIRNNLDRSPMYAGVIEGIGPRYCPSIEDKVMRFADRNQHQIFLEPEGLTSNEIYPNGISTSLPFDVQMQIVRSMQGMENAKIVRPGYAIEYDFFDPRDLKPTLESKFIHGLFFAGQINGTTGYEEAAAQGLLAGLNAARLSADKEGWAPARSQAYLGVLVDDLCTLGTKEPYRMFTSRAEYRLMLREDNADLRLTEMGRELGLVDDERWARFNEKLESIERERQRLKSTWVTPSAESADEVNAHLTTPLSREASGEDLLRRPEMTYAQLTSLAAFAPALEDEQAAEQVEIQVKYEGYIARQQDEIEKQLRNENTLLPATLDYRQVSGLSNEVIAKLNDHKPASIGQASRISGVTPAAISILLVWLKKQGMLRRSA.

FAD is bound by residues 13–18 (GGGHAG), Val125, and Ser180. 273–287 (GPRYCPSIEDKVMRF) provides a ligand contact to NAD(+). Gln370 contributes to the FAD binding site.

The protein belongs to the MnmG family. Homodimer. Heterotetramer of two MnmE and two MnmG subunits. FAD serves as cofactor.

Its subcellular location is the cytoplasm. NAD-binding protein involved in the addition of a carboxymethylaminomethyl (cmnm) group at the wobble position (U34) of certain tRNAs, forming tRNA-cmnm(5)s(2)U34. The protein is tRNA uridine 5-carboxymethylaminomethyl modification enzyme MnmG of Salmonella dublin (strain CT_02021853).